The chain runs to 351 residues: UDP-N-acetylglucosamine--N-acetylmuramyl-(pentapeptide) pyrophosphoryl-undecaprenol N-acetylglucosamine transferase (351 aa).

UDP-N-acetyl-alpha-D-glucosamine-binding positions include 12-14 (TGG), Asn-124, Arg-160, Ser-188, Ile-239, 258-263 (ALTVCE), and Gln-283.

This sequence belongs to the glycosyltransferase 28 family. MurG subfamily.

The protein localises to the cell inner membrane. It catalyses the reaction di-trans,octa-cis-undecaprenyl diphospho-N-acetyl-alpha-D-muramoyl-L-alanyl-D-glutamyl-meso-2,6-diaminopimeloyl-D-alanyl-D-alanine + UDP-N-acetyl-alpha-D-glucosamine = di-trans,octa-cis-undecaprenyl diphospho-[N-acetyl-alpha-D-glucosaminyl-(1-&gt;4)]-N-acetyl-alpha-D-muramoyl-L-alanyl-D-glutamyl-meso-2,6-diaminopimeloyl-D-alanyl-D-alanine + UDP + H(+). The protein operates within cell wall biogenesis; peptidoglycan biosynthesis. In terms of biological role, cell wall formation. Catalyzes the transfer of a GlcNAc subunit on undecaprenyl-pyrophosphoryl-MurNAc-pentapeptide (lipid intermediate I) to form undecaprenyl-pyrophosphoryl-MurNAc-(pentapeptide)GlcNAc (lipid intermediate II). This chain is UDP-N-acetylglucosamine--N-acetylmuramyl-(pentapeptide) pyrophosphoryl-undecaprenol N-acetylglucosamine transferase, found in Actinobacillus pleuropneumoniae serotype 5b (strain L20).